The following is a 457-amino-acid chain: tRNA-2-methylthio-N(6)-dimethylallyladenosine synthase (457 aa).

In terms of domain architecture, MTTase N-terminal spans 3 to 120; the sequence is KKVYVKTFGC…LPQMIDKRRE (118 aa). Residues cysteine 12, cysteine 49, cysteine 83, cysteine 157, cysteine 161, and cysteine 164 each contribute to the [4Fe-4S] cluster site. The 235-residue stretch at 143-377 folds into the Radical SAM core domain; the sequence is RVDGPSAFVS…QATIEENVQR (235 aa). Positions 380 to 447 constitute a TRAM domain; sequence DSMVGKIERI…PHSLRGELVL (68 aa).

It belongs to the methylthiotransferase family. MiaB subfamily. In terms of assembly, monomer. [4Fe-4S] cluster serves as cofactor.

The protein resides in the cytoplasm. The enzyme catalyses N(6)-dimethylallyladenosine(37) in tRNA + (sulfur carrier)-SH + AH2 + 2 S-adenosyl-L-methionine = 2-methylsulfanyl-N(6)-dimethylallyladenosine(37) in tRNA + (sulfur carrier)-H + 5'-deoxyadenosine + L-methionine + A + S-adenosyl-L-homocysteine + 2 H(+). In terms of biological role, catalyzes the methylthiolation of N6-(dimethylallyl)adenosine (i(6)A), leading to the formation of 2-methylthio-N6-(dimethylallyl)adenosine (ms(2)i(6)A) at position 37 in tRNAs that read codons beginning with uridine. This Paraburkholderia xenovorans (strain LB400) protein is tRNA-2-methylthio-N(6)-dimethylallyladenosine synthase.